Here is a 69-residue protein sequence, read N- to C-terminus: Ribosome modulation factor (69 aa).

This sequence belongs to the ribosome modulation factor family.

It localises to the cytoplasm. In terms of biological role, during stationary phase, converts 70S ribosomes to an inactive dimeric form (100S ribosomes). The polypeptide is Ribosome modulation factor (Hahella chejuensis (strain KCTC 2396)).